A 209-amino-acid chain; its full sequence is Guanylate kinase (209 aa).

Residues 16–198 (GRLVIISGPS…AVTEICQILL (183 aa)) form the Guanylate kinase-like domain. ATP is bound at residue 23–30 (GPSGAGKS).

This sequence belongs to the guanylate kinase family.

The protein resides in the cytoplasm. The enzyme catalyses GMP + ATP = GDP + ADP. Essential for recycling GMP and indirectly, cGMP. This Rhodopirellula baltica (strain DSM 10527 / NCIMB 13988 / SH1) protein is Guanylate kinase.